A 191-amino-acid chain; its full sequence is Lipopolysaccharide export system protein LptC (191 aa).

Residues Trp7–Ala25 form a helical membrane-spanning segment.

Belongs to the LptC family. In terms of assembly, component of the lipopolysaccharide transport and assembly complex. Interacts with LptA and the LptBFG transporter complex.

It localises to the cell inner membrane. In terms of biological role, involved in the assembly of lipopolysaccharide (LPS). Required for the translocation of LPS from the inner membrane to the outer membrane. Facilitates the transfer of LPS from the inner membrane to the periplasmic protein LptA. Could be a docking site for LptA. This Escherichia coli O157:H7 protein is Lipopolysaccharide export system protein LptC.